Here is a 226-residue protein sequence, read N- to C-terminus: Fibrillarin-like rRNA/tRNA 2'-O-methyltransferase (226 aa).

S-adenosyl-L-methionine-binding positions include 85–86 (TT), 104–105 (EF), 129–130 (DA), and 149–152 (DVAQ).

This sequence belongs to the methyltransferase superfamily. Fibrillarin family. In terms of assembly, interacts with nop5. Component of box C/D small ribonucleoprotein (sRNP) particles that contain rpl7ae, FlpA and nop5, plus a guide RNA.

In terms of biological role, involved in pre-rRNA and tRNA processing. Utilizes the methyl donor S-adenosyl-L-methionine to catalyze the site-specific 2'-hydroxyl methylation of ribose moieties in rRNA and tRNA. Site specificity is provided by a guide RNA that base pairs with the substrate. Methylation occurs at a characteristic distance from the sequence involved in base pairing with the guide RNA. In Thermococcus onnurineus (strain NA1), this protein is Fibrillarin-like rRNA/tRNA 2'-O-methyltransferase.